The chain runs to 751 residues: Semaphorin-3C (751 aa).

Positions 1–21 (MAFQAVCILVGVFVCSTYVKG) are cleaved as a signal peptide. Positions 28 to 511 (RVYLTFDELR…SNEGLAQVSL (484 aa)) constitute a Sema domain. The N-linked (GlcNAc...) asparagine glycan is linked to Asn-81. Cys-101 and Cys-112 form a disulfide bridge. An N-linked (GlcNAc...) asparagine glycan is attached at Asn-123. 3 cysteine pairs are disulfide-bonded: Cys-130–Cys-139, Cys-266–Cys-378, and Cys-290–Cys-338. Asn-268 is a glycosylation site (N-linked (GlcNAc...) asparagine). An N-linked (GlcNAc...) asparagine glycan is attached at Asn-465. Cys-514 and Cys-532 form a disulfide bridge. The Ig-like C2-type domain occupies 571–655 (AYRNAAEIVQ…TENSFKQTIA (85 aa)). 2 N-linked (GlcNAc...) asparagine glycosylation sites follow: Asn-585 and Asn-586. Cys-592 and Cys-643 form a disulfide bridge. Residues 712–731 (TRQQHQQGEESQKMRGDYGK) are compositionally biased toward basic and acidic residues. The disordered stretch occupies residues 712-751 (TRQQHQQGEESQKMRGDYGKLKALINSRKSRNRRNQLPES).

This sequence belongs to the semaphorin family. Interacts with PLXND1.

It is found in the secreted. In terms of biological role, binds to plexin family members and plays an important role in the regulation of developmental processes. Required for normal cardiovascular development during embryogenesis. Functions as attractant for growing axons, and thereby plays an important role in axon growth and axon guidance. In Bos taurus (Bovine), this protein is Semaphorin-3C (SEMA3C).